The primary structure comprises 261 residues: MTHQTHAYHMVNPSPWPLTGALSALLMTSGLAMWFHFNSTLLLALGLLTNILTMYQWWRDIIRESTFQGHHTSIVQKGLRYGMILFIISEVFFFSGFFWAFYHSSLAPTPELGGCWPPTGIHPLNPLEVPLLNTSVLLASGVSITWAHHSLMEGNRKNMLQGLFITISLGVYFTLLQASEYYEASFTISDGVYGSTFFVATGFHGLHVIIGSTFLIVCFLRQLKFHFTSSHHFGFEAAAWYWHFVDVVWLFLYVSIYWWGS.

Residues 1–15 (MTHQTHAYHMVNPSP) lie on the Mitochondrial matrix side of the membrane. A helical membrane pass occupies residues 16–34 (WPLTGALSALLMTSGLAMW). Topologically, residues 35 to 40 (FHFNST) are mitochondrial intermembrane. A helical membrane pass occupies residues 41–66 (LLLALGLLTNILTMYQWWRDIIREST). The Mitochondrial matrix portion of the chain corresponds to 67–72 (FQGHHT). Residues 73-105 (SIVQKGLRYGMILFIISEVFFFSGFFWAFYHSS) traverse the membrane as a helical segment. The Mitochondrial intermembrane portion of the chain corresponds to 106-128 (LAPTPELGGCWPPTGIHPLNPLE). A helical transmembrane segment spans residues 129 to 152 (VPLLNTSVLLASGVSITWAHHSLM). At 153–155 (EGN) the chain is on the mitochondrial matrix side. Residues 156–183 (RKNMLQGLFITISLGVYFTLLQASEYYE) form a helical membrane-spanning segment. Residues 184-190 (ASFTISD) lie on the Mitochondrial intermembrane side of the membrane. The chain crosses the membrane as a helical span at residues 191–223 (GVYGSTFFVATGFHGLHVIIGSTFLIVCFLRQL). The Mitochondrial matrix portion of the chain corresponds to 224–232 (KFHFTSSHH). The chain crosses the membrane as a helical span at residues 233 to 256 (FGFEAAAWYWHFVDVVWLFLYVSI). Residues 257–261 (YWWGS) lie on the Mitochondrial intermembrane side of the membrane.

It belongs to the cytochrome c oxidase subunit 3 family. As to quaternary structure, component of the cytochrome c oxidase (complex IV, CIV), a multisubunit enzyme composed of 14 subunits. The complex is composed of a catalytic core of 3 subunits MT-CO1, MT-CO2 and MT-CO3, encoded in the mitochondrial DNA, and 11 supernumerary subunits COX4I, COX5A, COX5B, COX6A, COX6B, COX6C, COX7A, COX7B, COX7C, COX8 and NDUFA4, which are encoded in the nuclear genome. The complex exists as a monomer or a dimer and forms supercomplexes (SCs) in the inner mitochondrial membrane with NADH-ubiquinone oxidoreductase (complex I, CI) and ubiquinol-cytochrome c oxidoreductase (cytochrome b-c1 complex, complex III, CIII), resulting in different assemblies (supercomplex SCI(1)III(2)IV(1) and megacomplex MCI(2)III(2)IV(2)).

Its subcellular location is the mitochondrion inner membrane. The catalysed reaction is 4 Fe(II)-[cytochrome c] + O2 + 8 H(+)(in) = 4 Fe(III)-[cytochrome c] + 2 H2O + 4 H(+)(out). In terms of biological role, component of the cytochrome c oxidase, the last enzyme in the mitochondrial electron transport chain which drives oxidative phosphorylation. The respiratory chain contains 3 multisubunit complexes succinate dehydrogenase (complex II, CII), ubiquinol-cytochrome c oxidoreductase (cytochrome b-c1 complex, complex III, CIII) and cytochrome c oxidase (complex IV, CIV), that cooperate to transfer electrons derived from NADH and succinate to molecular oxygen, creating an electrochemical gradient over the inner membrane that drives transmembrane transport and the ATP synthase. Cytochrome c oxidase is the component of the respiratory chain that catalyzes the reduction of oxygen to water. Electrons originating from reduced cytochrome c in the intermembrane space (IMS) are transferred via the dinuclear copper A center (CU(A)) of subunit 2 and heme A of subunit 1 to the active site in subunit 1, a binuclear center (BNC) formed by heme A3 and copper B (CU(B)). The BNC reduces molecular oxygen to 2 water molecules using 4 electrons from cytochrome c in the IMS and 4 protons from the mitochondrial matrix. The chain is Cytochrome c oxidase subunit 3 (MT-CO3) from Equus asinus (Donkey).